A 401-amino-acid polypeptide reads, in one-letter code: Phosphoglycerate kinase (401 aa).

Residues aspartate 24 to asparagine 26, arginine 40, histidine 63 to arginine 66, arginine 122, and arginine 155 each bind substrate. ATP is bound by residues lysine 206, glycine 297, glutamate 328, and glycine 357–serine 360.

It belongs to the phosphoglycerate kinase family. Monomer.

Its subcellular location is the cytoplasm. The enzyme catalyses (2R)-3-phosphoglycerate + ATP = (2R)-3-phospho-glyceroyl phosphate + ADP. It participates in carbohydrate degradation; glycolysis; pyruvate from D-glyceraldehyde 3-phosphate: step 2/5. This Gloeothece citriformis (strain PCC 7424) (Cyanothece sp. (strain PCC 7424)) protein is Phosphoglycerate kinase.